A 782-amino-acid chain; its full sequence is LPS-assembly protein LptD (782 aa).

An N-terminal signal peptide occupies residues 1–23 (MNKKHTLISLAILTALYSQQSLA).

This sequence belongs to the LptD family. As to quaternary structure, component of the lipopolysaccharide transport and assembly complex. Interacts with LptE and LptA.

The protein localises to the cell outer membrane. Together with LptE, is involved in the assembly of lipopolysaccharide (LPS) at the surface of the outer membrane. The protein is LPS-assembly protein LptD of Haemophilus influenzae (strain ATCC 51907 / DSM 11121 / KW20 / Rd).